Reading from the N-terminus, the 278-residue chain is Dermonecrotic toxin Ls4SicTox-alphaIII1ii (278 aa).

Histidine 5 is an active-site residue. Residues glutamate 25 and aspartate 27 each contribute to the Mg(2+) site. Histidine 40 (nucleophile) is an active-site residue. Cysteine 44 and cysteine 50 are oxidised to a cystine. A Mg(2+)-binding site is contributed by aspartate 84.

The protein belongs to the arthropod phospholipase D family. Class I subfamily. Mg(2+) serves as cofactor. Expressed by the venom gland.

The protein resides in the secreted. It catalyses the reaction an N-(acyl)-sphingosylphosphocholine = an N-(acyl)-sphingosyl-1,3-cyclic phosphate + choline. It carries out the reaction an N-(acyl)-sphingosylphosphoethanolamine = an N-(acyl)-sphingosyl-1,3-cyclic phosphate + ethanolamine. The enzyme catalyses a 1-acyl-sn-glycero-3-phosphocholine = a 1-acyl-sn-glycero-2,3-cyclic phosphate + choline. The catalysed reaction is a 1-acyl-sn-glycero-3-phosphoethanolamine = a 1-acyl-sn-glycero-2,3-cyclic phosphate + ethanolamine. Functionally, dermonecrotic toxins cleave the phosphodiester linkage between the phosphate and headgroup of certain phospholipids (sphingolipid and lysolipid substrates), forming an alcohol (often choline) and a cyclic phosphate. This toxin acts on sphingomyelin (SM). It may also act on ceramide phosphoethanolamine (CPE), lysophosphatidylcholine (LPC) and lysophosphatidylethanolamine (LPE), but not on lysophosphatidylserine (LPS), and lysophosphatidylglycerol (LPG). It acts by transphosphatidylation, releasing exclusively cyclic phosphate products as second products. Induces dermonecrosis, hemolysis, increased vascular permeability, edema, inflammatory response, and platelet aggregation. This is Dermonecrotic toxin Ls4SicTox-alphaIII1ii from Loxosceles sp. (strain 4 GJB-2008) (Recluse spider).